The following is a 240-amino-acid chain: Uridylate kinase (240 aa).

Position 12 to 15 (12 to 15 (KISG)) interacts with ATP. Residues 20 to 25 (GNQGFG) form an involved in allosteric activation by GTP region. G54 is a UMP binding site. Positions 55 and 59 each coordinate ATP. Residues D74 and 135–142 (TGNPYFST) each bind UMP. Positions 168 and 171 each coordinate ATP.

It belongs to the UMP kinase family. As to quaternary structure, homohexamer.

The protein resides in the cytoplasm. It catalyses the reaction UMP + ATP = UDP + ADP. It functions in the pathway pyrimidine metabolism; CTP biosynthesis via de novo pathway; UDP from UMP (UMPK route): step 1/1. Its activity is regulated as follows. Allosterically activated by GTP. Inhibited by UTP. Catalyzes the reversible phosphorylation of UMP to UDP. The polypeptide is Uridylate kinase (Moorella thermoacetica (strain ATCC 39073 / JCM 9320)).